A 231-amino-acid chain; its full sequence is tRNA (guanine-N(1)-)-methyltransferase (231 aa).

Residues Gly112 and 132–137 (LGDFVL) contribute to the S-adenosyl-L-methionine site.

Belongs to the RNA methyltransferase TrmD family. Homodimer.

It is found in the cytoplasm. The enzyme catalyses guanosine(37) in tRNA + S-adenosyl-L-methionine = N(1)-methylguanosine(37) in tRNA + S-adenosyl-L-homocysteine + H(+). Specifically methylates guanosine-37 in various tRNAs. The chain is tRNA (guanine-N(1)-)-methyltransferase from Gloeothece citriformis (strain PCC 7424) (Cyanothece sp. (strain PCC 7424)).